Here is a 392-residue protein sequence, read N- to C-terminus: Na(+)/H(+) antiporter NhaA 2 (392 aa).

A run of 11 helical transmembrane segments spans residues 20 to 40, 61 to 81, 99 to 119, 127 to 147, 158 to 178, 181 to 201, 209 to 229, 265 to 285, 298 to 318, 336 to 356, and 365 to 385; these read FFAA…AALI, LSVS…LVGL, ALPG…YVAF, IGGW…VLSL, IFLS…IALF, SDLS…LVAL, LLPY…SGIH, VAFA…LSGI, VALG…ALAI, GVAA…ALAF, and EVKV…VVVL.

This sequence belongs to the NhaA Na(+)/H(+) (TC 2.A.33) antiporter family.

Its subcellular location is the cell inner membrane. The enzyme catalyses Na(+)(in) + 2 H(+)(out) = Na(+)(out) + 2 H(+)(in). Na(+)/H(+) antiporter that extrudes sodium in exchange for external protons. The polypeptide is Na(+)/H(+) antiporter NhaA 2 (Pseudomonas syringae pv. syringae (strain B728a)).